The sequence spans 1237 residues: Phosphorylase b kinase regulatory subunit alpha, skeletal muscle isoform (1237 aa).

Ser-629, Ser-729, Ser-735, and Ser-758 each carry phosphoserine. The calmodulin-binding stretch occupies residues 810–840 (LTELYGKVGKIRHWGLIRYISGILRKKVEAL). Ser-972 carries the post-translational modification Phosphoserine; by autocatalysis. Ser-981 carries the phosphoserine modification. Phosphoserine; by autocatalysis is present on residues Ser-985 and Ser-1007. At Ser-1018 the chain carries Phosphoserine; by PKA. A phosphoserine mark is found at Ser-1020, Ser-1023, and Ser-1030. The interval 1021-1069 (TESQPNGGHSLGADLMSPSFLSPGTSVTPSSGSFPGHHTSKDSRQGQWQ) is disordered. Positions 1042–1056 (SPGTSVTPSSGSFPG) are enriched in low complexity. Positions 1060-1100 (SKDSRQGQWQRRRRLDGALNRVPIGFYQKVWKVLQKCHGLS) are calmodulin-binding. Ser-1127 carries the post-translational modification Phosphoserine. Cys-1234 carries S-farnesyl cysteine lipidation.

This sequence belongs to the phosphorylase b kinase regulatory chain family. As to quaternary structure, hexadecamer of 4 heterotetramers, each composed of alpha, beta, gamma, and delta subunits. Alpha (PHKA1 or PHKA2) and beta (PHKB) are regulatory subunits, gamma (PHKG1 or PHKG2) is the catalytic subunit, and delta is calmodulin. Post-translationally, phosphorylation of Ser-1018 by PKA stimulates the dephosphorylation of the beta subunit and, thus, reverses the initial stimulation of PHK by the faster beta-subunit phosphorylation by PKA, that occurs in muscle in response to adrenaline. Cys-1234 is farnesylated, but the C-terminal tripeptide is not removed and the cysteine carboxyl is not methylated. Isoform 1 predominates in muscle, heart, brain and testis. Isoforms 1 and 2 are expressed in similar quantities in the other tissues. Isoform 3 is highly expressed in slow muscle and heart.

The protein resides in the cell membrane. Its pathway is glycan biosynthesis; glycogen metabolism. With respect to regulation, by phosphorylation of various serine residues and by calcium. Its function is as follows. Phosphorylase b kinase catalyzes the phosphorylation of serine in certain substrates, including troponin I. The alpha chain may bind calmodulin. This chain is Phosphorylase b kinase regulatory subunit alpha, skeletal muscle isoform (PHKA1), found in Oryctolagus cuniculus (Rabbit).